The primary structure comprises 429 residues: Chaperone SurA (429 aa).

A signal peptide spans 1–18; it reads MFKRIALVCALFSGICFA. 2 consecutive PpiC domains span residues 170–271 and 281–380; these read NLTY…KLVA and ITQT…EVIA.

It localises to the periplasm. It carries out the reaction [protein]-peptidylproline (omega=180) = [protein]-peptidylproline (omega=0). In terms of biological role, chaperone involved in the correct folding and assembly of outer membrane proteins. Recognizes specific patterns of aromatic residues and the orientation of their side chains, which are found more frequently in integral outer membrane proteins. May act in both early periplasmic and late outer membrane-associated steps of protein maturation. In Legionella pneumophila (strain Paris), this protein is Chaperone SurA.